A 754-amino-acid chain; its full sequence is Glutathione biosynthesis bifunctional protein GshAB (754 aa).

The glutamate--cysteine ligase stretch occupies residues 1-332 (MTLNQLLQKL…QGHALNEKIA (332 aa)). Residues 488 to 746 (KKILADASFP…ITTKILDKLF (259 aa)) form the ATP-grasp domain. ATP is bound at residue 515 to 573 (PLIKDKQIVVKPKSTNFGLGISIFQEPASLDNYQKALEIAFAEDTSVLVEEFIPGTEYR). Positions 695, 716, and 718 each coordinate Mg(2+). 3 residues coordinate Mn(2+): D695, E716, and N718.

The protein in the N-terminal section; belongs to the glutamate--cysteine ligase type 1 family. Type 2 subfamily. Monomer. The cofactor is Mg(2+). It depends on Mn(2+) as a cofactor.

It carries out the reaction L-cysteine + L-glutamate + ATP = gamma-L-glutamyl-L-cysteine + ADP + phosphate + H(+). The enzyme catalyses gamma-L-glutamyl-L-cysteine + glycine + ATP = glutathione + ADP + phosphate + H(+). The protein operates within sulfur metabolism; glutathione biosynthesis; glutathione from L-cysteine and L-glutamate: step 1/2. It functions in the pathway sulfur metabolism; glutathione biosynthesis; glutathione from L-cysteine and L-glutamate: step 2/2. Synthesizes glutathione from L-glutamate and L-cysteine via gamma-L-glutamyl-L-cysteine. This is Glutathione biosynthesis bifunctional protein GshAB from Streptococcus thermophilus (strain ATCC BAA-250 / LMG 18311).